We begin with the raw amino-acid sequence, 311 residues long: Thioredoxin reductase (311 aa).

35–42 (ERGIPGGQ) is a binding site for FAD. Cys134 and Cys137 are oxidised to a cystine. An FAD-binding site is contributed by 277-286 (DVRDKGLRQI).

Belongs to the class-II pyridine nucleotide-disulfide oxidoreductase family. As to quaternary structure, homodimer. Requires FAD as cofactor.

Its subcellular location is the cytoplasm. The catalysed reaction is [thioredoxin]-dithiol + NADP(+) = [thioredoxin]-disulfide + NADPH + H(+). The polypeptide is Thioredoxin reductase (trxB) (Staphylococcus aureus (strain COL)).